We begin with the raw amino-acid sequence, 173 residues long: Nucleoside-triphosphatase THEP1 (173 aa).

Residues 9–16 and 97–104 contribute to the ATP site; these read GPPGVGKT and LYVIDEVG.

Belongs to the THEP1 NTPase family.

The catalysed reaction is a ribonucleoside 5'-triphosphate + H2O = a ribonucleoside 5'-diphosphate + phosphate + H(+). Has nucleotide phosphatase activity towards ATP, GTP, CTP, TTP and UTP. May hydrolyze nucleoside diphosphates with lower efficiency. This chain is Nucleoside-triphosphatase THEP1, found in Caldivirga maquilingensis (strain ATCC 700844 / DSM 13496 / JCM 10307 / IC-167).